A 961-amino-acid polypeptide reads, in one-letter code: Gamma-tubulin small complex component GCP2 (961 aa).

The segment at 15-76 (NLHRSPKLAT…KPSIPPLKSE (62 aa)) is disordered. The segment covering 43-54 (LGSNVVSHPTRS) has biased composition (polar residues). A compositionally biased stretch (basic and acidic residues) spans 55 to 65 (SPEKTTDKPAD).

It belongs to the TUBGCP family. In terms of assembly, component of the gamma-tubulin small complex (gamma-TuSC) composed of tubulin gamma chain, gamma-tubulin complex protein 2 (GCP2) and gamma-tubulin complex protein 3 (GCP3). Interacts with tubulin gamma chain.

Its subcellular location is the cytoplasm. The protein localises to the cytoskeleton. It is found in the flagellum axoneme. It localises to the flagellum basal body. Its function is as follows. Component of the gamma-tubulin small complex (gamma-TuSC) involved in microtubule (MT) nucleation for the formation of median bodies and in the biogenesis of flagella. Gamma-TuSC may be required for the correct positioning of EB1 within the trophozoites. The polypeptide is Gamma-tubulin small complex component GCP2 (Giardia intestinalis (strain ATCC 50803 / WB clone C6) (Giardia lamblia)).